A 162-amino-acid chain; its full sequence is Probable ergosterol biosynthetic protein 28 homolog (162 aa).

4 consecutive transmembrane segments (helical) span residues 7-25, 40-60, 69-89, and 96-116; these read AWMSIVVVQAMGSVWMCYA, LSRAHALPLALLCILRIVLIF, IAHILLSILTAIHTMTEVFFY, and IVTVTEVTLNSFSVVVMLTFL.

It belongs to the ERG28 family. In terms of tissue distribution, expressed in tissues including muscles, intestine and neurons.

Its subcellular location is the endoplasmic reticulum membrane. The protein resides in the cell projection. The protein localises to the dendrite. Promotes the translocation of slo-1 potassium ion channels from the endoplasmic reticulum to its final destination at the plasma membrane, probably by shielding from premature proteasomal degradation in the endoplasmic reticulum. Maintains the levels of slo-1 potassium ion channel at the presynaptic neurons. The chain is Probable ergosterol biosynthetic protein 28 homolog from Caenorhabditis elegans.